The sequence spans 2443 residues: NFX1-type zinc finger-containing protein 1 homolog (2443 aa).

3 disordered regions span residues 212–339 (PHKQ…EGDH), 545–566 (SSDS…NVYG), and 583–672 (HRDN…FVSP). Over residues 246 to 263 (ISISNSSPPGLSSVSPIP) the composition is skewed to low complexity. Positions 275–294 (PQPPGLSIPAPPGISLPTPP) are enriched in pro residues. Residues 297–310 (SLQNHQNDQFEQAH) show a composition bias toward polar residues. Low complexity predominate over residues 311–322 (STISRMSENSSS). Polar residues predominate over residues 545–564 (SSDSGRQVLSESRGAGSSNV). Basic and acidic residues-rich tracts occupy residues 601–638 (GEVH…RRDQ) and 662–672 (EHSRDDKFVSP). The UvrD-like helicase ATP-binding domain occupies 1040 to 1545 (MDESQRLAFC…MNLTISDKIV (506 aa)). Position 1061-1068 (1061-1068 (GPPGTGKT)) interacts with ATP. NF-X1-type zinc fingers lie at residues 1769–1791 (CGHV…RCLY), 1853–1873 (CGHA…ECSQ), 1912–1930 (CPHK…ECME), and 2027–2044 (CGHT…PCKA).

Belongs to the ZNFX1 family. As to quaternary structure, interacts with ego-1, csr-1, wago-1 and prg-1. Interacts with wago-4; the interaction promotes the transmission of epigenetic information across generations. In terms of tissue distribution, expressed in germs cells. Not expressed in somatic tissues.

It is found in the cytoplasm. The protein resides in the perinuclear region. Its subcellular location is the cytoplasmic granule. The enzyme catalyses ATP + H2O = ADP + phosphate + H(+). Functionally, epigenetic inheritance factor which, in association with the Argonaute protein wago-4, mediates small RNA-directed transgenerational epigenetic inheritance and thus balances the transgenerational inheritance of epigenetic information. Specifically, maintains a balanced production of small RNAs by preventing the spread of epigenetic signals towards the 5'-end of target mRNAs. Plays a role in small RNA-induced gene silencing in the germline. This is NFX1-type zinc finger-containing protein 1 homolog from Caenorhabditis elegans.